A 293-amino-acid polypeptide reads, in one-letter code: 4-hydroxy-tetrahydrodipicolinate synthase (293 aa).

Thr51 contributes to the pyruvate binding site. The Proton donor/acceptor role is filled by Tyr140. Lys168 (schiff-base intermediate with substrate) is an active-site residue. Residue Ile209 coordinates pyruvate.

It belongs to the DapA family. Homotetramer; dimer of dimers.

It is found in the cytoplasm. It catalyses the reaction L-aspartate 4-semialdehyde + pyruvate = (2S,4S)-4-hydroxy-2,3,4,5-tetrahydrodipicolinate + H2O + H(+). The protein operates within amino-acid biosynthesis; L-lysine biosynthesis via DAP pathway; (S)-tetrahydrodipicolinate from L-aspartate: step 3/4. Functionally, catalyzes the condensation of (S)-aspartate-beta-semialdehyde [(S)-ASA] and pyruvate to 4-hydroxy-tetrahydrodipicolinate (HTPA). The protein is 4-hydroxy-tetrahydrodipicolinate synthase of Streptococcus mutans serotype c (strain ATCC 700610 / UA159).